The primary structure comprises 1066 residues: Pumilio homolog 2 (1066 aa).

The interaction with SNAPIN stretch occupies residues 1 to 260 (MNHDFQALAL…TVGLFDYNSQ (260 aa)). Serine 67, serine 70, serine 82, and serine 102 each carry phosphoserine. 3 disordered regions span residues 106-203 (KLDS…GPLP), 368-408 (TANQ…AESL), and 490-551 (TGST…SASL). A compositionally biased stretch (basic and acidic residues) spans 119-133 (RDAETDGPEKGDQKG). 3 positions are modified to phosphoserine: serine 136, serine 177, and serine 181. The residue at position 183 (threonine 183) is a Phosphothreonine. The span at 368–383 (TANQQAASQAQPGQQQ) shows a compositional bias: low complexity. Residues 394–406 (ITPSQGQQGQQAE) show a composition bias toward polar residues. At threonine 395 the chain carries Phosphothreonine. Residues 503–514 (QPPQQQQQQQQP) are compositionally biased toward low complexity. The segment covering 515–525 (STNLQSNSFYG) has biased composition (polar residues). The span at 526-540 (SSSLTNSSQSSSLFS) shows a compositional bias: low complexity. 2 positions are modified to phosphoserine: serine 587 and serine 592. The tract at residues 620–650 (SPIGMPLPSQTPGHSLTPPPSLSSHGSSSSL) is disordered. The span at 630-650 (TPGHSLTPPPSLSSHGSSSSL) shows a compositional bias: low complexity. The residue at position 674 (arginine 674) is an Omega-N-methylarginine. Phosphoserine occurs at positions 684 and 700. One can recognise a PUM-HD domain in the interval 706-1048 (GRSRLLEDFR…HILAKLEKYY (343 aa)). 8 Pumilio repeats span residues 726-761 (DLIGHIVEFSQDQHGSRFIQQKLERATPAERQIVFN), 762-797 (EILQAAYQLMTDVFGNYVIQKFFEFGSLDQKLALAT), 798-835 (RIRGHVLPLALQMYGCRVIQKALESISSDQQVISEMVK), 836-871 (ELDGHVLKCVKDQNGNHVVQKCIECVQPQSLQFIID), 872-907 (AFKGQVFVLSTHPYGCRVIQRILEHCTAEQTLPILE), 908-943 (ELHQHTEQLVQDQYGNYVIQHVLEHGRPEDKSKIVS), 944-979 (EIRGKVLALSQHKFASNVVEKCVTHASRAERALLID), and 980-1022 (EVCC…IIMH). The adenine-nucleotide binding in RNA target stretch occupies residues 741–745 (SRFIQ). The segment at 777–781 (NYVIQ) is uracil-nucleotide binding in RNA target. The interval 813-817 (CRVIQ) is adenine-nucleotide binding in RNA target. The segment at 851-855 (NHVVQ) is non-specific-nucleotide binding in RNA target. The segment at 887–891 (CRVIQ) is adenine-nucleotide binding in RNA target. The interval 923–927 (NYVIQ) is uracil-nucleotide binding in RNA target. Residues 959–963 (SNVVE) are guanine-nucleotide binding in RNA target. Residues 1002–1006 (NYVVQ) form a uracil-nucleotide binding in RNA target region.

As to quaternary structure, homodimer; homodimerizes in vitro. Interacts with DAZ1, DAZL and NANOS1 via its pumilio repeats. Interacts with NANOS3. Interacts with SNAPIN. Recruits the CCR4-POP2-NOT deadenylase leading to translational inhibition and mRNA degradation. Interacts with DDX20. In case of viral infection, interacts with DHX58. In terms of tissue distribution, widely expressed. Expressed in embryonic stem cells, heart, kidney, lung, skin, intestine, spleen and thymus. Expressed at intermediate level in brain and liver. Weakly or not expressed in muscles and stomach. Expressed at various stages of myeloid and lymphoid cell development. In the testis expressed in the spermatogoni, spermatocytes, spermatids and Sertoli cells.

The protein localises to the cytoplasm. The protein resides in the cytoplasmic granule. Its subcellular location is the perinuclear region. Sequence-specific RNA-binding protein that acts as a post-transcriptional repressor by binding the 3'-UTR of mRNA targets. Binds to an RNA consensus sequence, the Pumilio Response Element (PRE), 5'-UGUANAUA-3', that is related to the Nanos Response Element (NRE). Mediates post-transcriptional repression of transcripts via different mechanisms: acts via direct recruitment of the CCR4-POP2-NOT deadenylase leading to translational inhibition and mRNA degradation. Also mediates deadenylation-independent repression by promoting accessibility of miRNAs. Acts as a post-transcriptional repressor of E2F3 mRNAs by binding to its 3'-UTR and facilitating miRNA regulation. Plays a role in cytoplasmic sensing of viral infection. Represses a program of genes necessary to maintain genomic stability such as key mitotic, DNA repair and DNA replication factors. Its ability to repress those target mRNAs is regulated by the lncRNA NORAD (non-coding RNA activated by DNA damage) which, due to its high abundance and multitude of PUMILIO binding sites, is able to sequester a significant fraction of PUM1 and PUM2 in the cytoplasm. May regulate DCUN1D3 mRNA levels. May support proliferation and self-renewal of stem cells. Binds specifically to miRNA MIR199A precursor, with PUM1, regulates miRNA MIR199A expression at a postranscriptional level. The polypeptide is Pumilio homolog 2 (Pum2) (Mus musculus (Mouse)).